The sequence spans 333 residues: Biotin synthase (333 aa).

The 227-residue stretch at 47–273 (YYGNKVKLNM…MNPTKEIRIA (227 aa)) folds into the Radical SAM core domain. 3 residues coordinate [4Fe-4S] cluster: Cys65, Cys69, and Cys72. Residues Cys109, Cys141, Cys201, and Arg271 each coordinate [2Fe-2S] cluster.

Belongs to the radical SAM superfamily. Biotin synthase family. In terms of assembly, homodimer. Requires [4Fe-4S] cluster as cofactor. [2Fe-2S] cluster is required as a cofactor.

The catalysed reaction is (4R,5S)-dethiobiotin + (sulfur carrier)-SH + 2 reduced [2Fe-2S]-[ferredoxin] + 2 S-adenosyl-L-methionine = (sulfur carrier)-H + biotin + 2 5'-deoxyadenosine + 2 L-methionine + 2 oxidized [2Fe-2S]-[ferredoxin]. Its pathway is cofactor biosynthesis; biotin biosynthesis; biotin from 7,8-diaminononanoate: step 2/2. Catalyzes the conversion of dethiobiotin (DTB) to biotin by the insertion of a sulfur atom into dethiobiotin via a radical-based mechanism. This is Biotin synthase from Geobacillus kaustophilus (strain HTA426).